We begin with the raw amino-acid sequence, 179 residues long: MESESVPTVPQTTRPGPRCYNCGENGHQARECTKGSICYNCNQTGHKASECTEPQQEKTCYACGTAGHLVRDCPSSPNPRQGAECYKCGRVGHIARDCRTNGQQSGGRFGGHRSNMNCYACGSYGHQARDCTMGVKCYSCGKIGHRSFECQQASDGQLCYKCNQPGHIAVNCTSPVIEA.

7 CCHC-type zinc fingers span residues 17–34, 36–53, 58–75, 83–100, 116–133, 135–152, and 157–174; these read PRCYNCGENGHQARECTK, SICYNCNQTGHKASECTE, KTCYACGTAGHLVRDCPS, AECYKCGRVGHIARDCRT, MNCYACGSYGHQARDCTM, VKCYSCGKIGHRSFECQQ, and QLCYKCNQPGHIAVNCTS.

It to human CNBP and to retroviral nucleic acid binding proteins (NBP). In terms of processing, phosphorylated.

Its subcellular location is the nucleus. In terms of biological role, acts in the sexual differentiation pathway. Is required for efficient conjugation. Double-stranded DNA-binding protein. In Schizosaccharomyces pombe (strain 972 / ATCC 24843) (Fission yeast), this protein is Cellular nucleic acid-binding protein homolog (byr3).